Reading from the N-terminus, the 135-residue chain is Protein NrdI (135 aa).

Belongs to the NrdI family.

In terms of biological role, probably involved in ribonucleotide reductase function. In Pectobacterium atrosepticum (strain SCRI 1043 / ATCC BAA-672) (Erwinia carotovora subsp. atroseptica), this protein is Protein NrdI.